The following is a 156-amino-acid chain: Putative pre-16S rRNA nuclease (156 aa).

It belongs to the YqgF nuclease family.

The protein localises to the cytoplasm. Could be a nuclease involved in processing of the 5'-end of pre-16S rRNA. The sequence is that of Putative pre-16S rRNA nuclease from Caulobacter vibrioides (strain ATCC 19089 / CIP 103742 / CB 15) (Caulobacter crescentus).